Consider the following 244-residue polypeptide: Small ribosomal subunit protein uS3 (244 aa).

The KH type-2 domain maps to 38–106 (IRKYLNARLA…EVQINIFEVK (69 aa)). Residues 222-235 (TGRRNDNAGGNRDK) are compositionally biased toward basic and acidic residues. A disordered region spans residues 222 to 244 (TGRRNDNAGGNRDKNFKRKRANR).

Belongs to the universal ribosomal protein uS3 family. Part of the 30S ribosomal subunit. Forms a tight complex with proteins S10 and S14.

Its function is as follows. Binds the lower part of the 30S subunit head. Binds mRNA in the 70S ribosome, positioning it for translation. This Parabacteroides distasonis (strain ATCC 8503 / DSM 20701 / CIP 104284 / JCM 5825 / NCTC 11152) protein is Small ribosomal subunit protein uS3.